A 563-amino-acid polypeptide reads, in one-letter code: Putative cysteine ligase BshC (563 aa).

Positions Leu474–Glu506 form a coiled coil.

It belongs to the BshC family.

The polypeptide is Putative cysteine ligase BshC (Prosthecochloris aestuarii (strain DSM 271 / SK 413)).